Here is a 650-residue protein sequence, read N- to C-terminus: SUMO-activating enzyme subunit 2 (650 aa).

ATP is bound by residues 25–30 (GAGGIG), Asp-49, 57–60 (NLNR), Lys-73, 96–97 (SI), and 118–123 (DNRAAR). Zn(2+) contacts are provided by Cys-159 and Cys-162. The active-site Glycyl thioester intermediate is Cys-174. Lys-191 is covalently cross-linked (Glycyl lysine isopeptide (Lys-Gly) (interchain with G-Cter in SUMO)). Lys-237 participates in a covalent cross-link: Glycyl lysine isopeptide (Lys-Gly) (interchain with G-Cter in SUMO1). Glycyl lysine isopeptide (Lys-Gly) (interchain with G-Cter in SUMO) cross-links involve residues Lys-258, Lys-282, and Lys-286. 2 residues coordinate Zn(2+): Cys-446 and Cys-449. The segment at 554-650 (DAPDKAPAPS…DDDEDIIALD (97 aa)) is disordered. Residues 572–586 (ANGNKDSAQPSTSSK) are compositionally biased toward polar residues. Over residues 590 to 603 (EDDDVLLVDSDEEP) the composition is skewed to acidic residues. Ser-599 is modified (phosphoserine). Residues Lys-618 and Lys-630 each participate in a glycyl lysine isopeptide (Lys-Gly) (interchain with G-Cter in SUMO) cross-link. Residues 638 to 650 (PADDDDEDIIALD) show a composition bias toward acidic residues.

Belongs to the ubiquitin-activating E1 family. As to quaternary structure, heterodimer of sae1 and uba2/sae2. The heterodimer corresponds to the two domains that are encoded on a single polypeptide chain in ubiquitin-activating enzyme E1. Interacts with ube2i. Post-translationally, sumoylated with SUMO1 and SUMO2/3 and by UBC9. Sumoylation at Lys-237 inhibits enzymatic activity. Sumoylation at the C-terminal lysine cluster plays an essential role in nuclear trafficking. As to expression, expressed in eye, brain and pectoral fins.

The protein localises to the cytoplasm. The protein resides in the nucleus. It participates in protein modification; protein sumoylation. In terms of biological role, the heterodimer acts as an E1 ligase for sumo1, sumo2, and sumo3. It mediates ATP-dependent activation of sumo proteins followed by formation of a thioester bond between a sumo protein and a conserved active site cysteine residue on uba2/sae2. The protein is SUMO-activating enzyme subunit 2 (uba2) of Danio rerio (Zebrafish).